The sequence spans 241 residues: uncharacterized protein (241 aa).

This is an uncharacterized protein from Pasteurella multocida (strain Pm70).